Here is a 327-residue protein sequence, read N- to C-terminus: Small ribosomal subunit protein RACK1z (327 aa).

WD repeat units lie at residues 13 to 44 (AHTD…ILWK), 61 to 91 (GHSH…RLWD), 103 to 133 (GHTK…KLWN), 148 to 180 (GHRD…KVWN), 192 to 222 (GHTG…LLWD), 233 to 262 (EANS…KIWD), and 293 to 323 (RKVI…RVWG).

This sequence belongs to the WD repeat G protein beta family. Ribosomal protein RACK1 subfamily. Homodimer and heterodimer with RACK1B or RACK1C. Interacts with NUDT7. Interacts with GB1, MEKK1, MKK4, MKK5, MPK3 and MPK6, but not with GPA1 or MPK4. Interacts with OFUT20. As to expression, widely expressed.

The protein localises to the cytoplasm. It localises to the nucleus. In terms of biological role, major component of the RACK1 regulatory proteins that play a role in multiple signal transduction pathways. Involved in multiple hormone responses and developmental processes. MAPK cascade scaffolding protein involved in the protease IV and ArgC signaling pathway but not the flg22 pathway. In Arabidopsis thaliana (Mouse-ear cress), this protein is Small ribosomal subunit protein RACK1z.